Reading from the N-terminus, the 149-residue chain is Large ribosomal subunit protein eL19 (149 aa).

The span at 55–69 (KGISSARKKEVQEQK) shows a compositional bias: basic and acidic residues. The disordered stretch occupies residues 55–93 (KGISSARKKEVQEQKRKGKRKGPGSRRGAKGARTPKKEK). Positions 70-88 (RKGKRKGPGSRRGAKGART) are enriched in basic residues.

Belongs to the eukaryotic ribosomal protein eL19 family. Part of the 50S ribosomal subunit.

Functionally, binds to the 23S rRNA. In Methanococcus vannielii, this protein is Large ribosomal subunit protein eL19.